A 514-amino-acid polypeptide reads, in one-letter code: Alpha-1B adrenergic receptor (514 aa).

Over 1 to 45 the chain is Extracellular; that stretch reads MNPDLDTGHNTSAPAHWGELKDANFTGPNQTSSNSTLPQLDVTRA. N-linked (GlcNAc...) asparagine glycans are attached at residues asparagine 10, asparagine 24, asparagine 29, and asparagine 34. Residues 46 to 69 traverse the membrane as a helical segment; that stretch reads ISVGCLGAFILFAIVGNILVILSV. At 70–82 the chain is on the cytoplasmic side; sequence ACNRHLRTPTNYF. A helical membrane pass occupies residues 83–104; sequence IVNLAIADLLLSFTDLPFSATL. Over 105 to 114 the chain is Extracellular; sequence EVLGYWVLGR. Residues 115 to 140 form a helical membrane-spanning segment; the sequence is IFCDIWAAVDVLCCTASILSLCAISI. The cysteines at positions 117 and 194 are disulfide-linked. Residues 141–160 are Cytoplasmic-facing; sequence DRYIGVRYSLQYPTLVTRRK. The helical transmembrane segment at 161–183 threads the bilayer; it reads AILALLSVWVLSTVISIGPLLGW. The Extracellular segment spans residues 184 to 200; it reads KEPAPNDDKECGVTEEP. The chain crosses the membrane as a helical span at residues 201–223; that stretch reads FYALFSSLGSFYIPLAVILVMYC. Residues 224-294 lie on the Cytoplasmic side of the membrane; sequence RVYIVAKRTT…FSREKKAAKT (71 aa). Position 263 is a phosphothreonine (threonine 263). Residues 295–318 traverse the membrane as a helical segment; that stretch reads LGIVVGMFILCWLPFFIALPLGSL. Topologically, residues 319–325 are extracellular; sequence FSTLKPP. A helical membrane pass occupies residues 326 to 350; the sequence is DAVFKVVFWLGYFNSCLNPIIYPCS. At 351-514 the chain is on the cytoplasmic side; that stretch reads SKEFKRAFMR…SNMPLAPGHF (164 aa). A lipid anchor (S-palmitoyl cysteine) is attached at cysteine 364. The Nuclear localization signal motif lies at 367-377; it reads RGGRRRRRRRR. Disordered regions lie at residues 391–429 and 473–514; these read GGSL…GYLG and LGEP…PGHF. A compositionally biased stretch (polar residues) spans 409–423; that stretch reads SCMSGSQRTLPSASP.

This sequence belongs to the G-protein coupled receptor 1 family. Adrenergic receptor subfamily. ADRA1B sub-subfamily. As to quaternary structure, homo- and heterooligomer. Heterooligomerizes with ADRA1B homooligomers in cardiac myocytes. Interacts with CAVIN4.

Its subcellular location is the nucleus membrane. The protein localises to the cell membrane. It localises to the cytoplasm. It is found in the membrane. The protein resides in the caveola. This alpha-adrenergic receptor mediates its action by association with G proteins that activate a phosphatidylinositol-calcium second messenger system. Its effect is mediated by G(q) and G(11) proteins. Nuclear ADRA1A-ADRA1B heterooligomers regulate phenylephrine (PE)-stimulated ERK signaling in cardiac myocytes. The protein is Alpha-1B adrenergic receptor (Adra1b) of Mus musculus (Mouse).